The primary structure comprises 1497 residues: DNA-directed RNA polymerase subunit beta (1497 aa).

The protein belongs to the RNA polymerase beta chain family. In terms of assembly, the RNAP catalytic core consists of 2 alpha, 1 beta, 1 beta' and 1 omega subunit. When a sigma factor is associated with the core the holoenzyme is formed, which can initiate transcription.

The enzyme catalyses RNA(n) + a ribonucleoside 5'-triphosphate = RNA(n+1) + diphosphate. In terms of biological role, DNA-dependent RNA polymerase catalyzes the transcription of DNA into RNA using the four ribonucleoside triphosphates as substrates. The sequence is that of DNA-directed RNA polymerase subunit beta from Trichlorobacter lovleyi (strain ATCC BAA-1151 / DSM 17278 / SZ) (Geobacter lovleyi).